The following is a 325-amino-acid chain: 33 kDa chaperonin (325 aa).

2 cysteine pairs are disulfide-bonded: Cys260–Cys262 and Cys293–Cys296.

Belongs to the HSP33 family. In terms of processing, under oxidizing conditions two disulfide bonds are formed involving the reactive cysteines. Under reducing conditions zinc is bound to the reactive cysteines and the protein is inactive.

It localises to the cytoplasm. Functionally, redox regulated molecular chaperone. Protects both thermally unfolding and oxidatively damaged proteins from irreversible aggregation. Plays an important role in the bacterial defense system toward oxidative stress. The polypeptide is 33 kDa chaperonin (Aquifex aeolicus (strain VF5)).